Consider the following 532-residue polypeptide: CTP synthase (532 aa).

An amidoligase domain region spans residues 1-267; sequence MTKYIFVTGG…DDIVLEHLQL (267 aa). Ser-13 lines the CTP pocket. Ser-13 contributes to the UTP binding site. Residue 14–19 coordinates ATP; that stretch reads SIGKGI. Tyr-54 is a binding site for L-glutamine. Asp-71 provides a ligand contact to ATP. Asp-71 and Glu-141 together coordinate Mg(2+). CTP contacts are provided by residues 148–150, 188–193, and Lys-224; these read DIE and KTKPTQ. UTP-binding positions include 188-193 and Lys-224; that span reads KTKPTQ. A Glutamine amidotransferase type-1 domain is found at 292-532; that stretch reads RIGLVGKYVS…DFVGAALNNK (241 aa). Gly-354 serves as a coordination point for L-glutamine. Cys-381 acts as the Nucleophile; for glutamine hydrolysis in catalysis. L-glutamine contacts are provided by residues 382-385, Glu-405, and Arg-462; that span reads LGMQ. Residues His-507 and Glu-509 contribute to the active site.

This sequence belongs to the CTP synthase family. As to quaternary structure, homotetramer.

It carries out the reaction UTP + L-glutamine + ATP + H2O = CTP + L-glutamate + ADP + phosphate + 2 H(+). It catalyses the reaction L-glutamine + H2O = L-glutamate + NH4(+). The catalysed reaction is UTP + NH4(+) + ATP = CTP + ADP + phosphate + 2 H(+). The protein operates within pyrimidine metabolism; CTP biosynthesis via de novo pathway; CTP from UDP: step 2/2. Its activity is regulated as follows. Allosterically activated by GTP, when glutamine is the substrate; GTP has no effect on the reaction when ammonia is the substrate. The allosteric effector GTP functions by stabilizing the protein conformation that binds the tetrahedral intermediate(s) formed during glutamine hydrolysis. Inhibited by the product CTP, via allosteric rather than competitive inhibition. Catalyzes the ATP-dependent amination of UTP to CTP with either L-glutamine or ammonia as the source of nitrogen. Regulates intracellular CTP levels through interactions with the four ribonucleotide triphosphates. This chain is CTP synthase, found in Listeria monocytogenes serotype 4b (strain F2365).